We begin with the raw amino-acid sequence, 359 residues long: Peptide chain release factor 1 (359 aa).

Glutamine 234 carries the post-translational modification N5-methylglutamine. Residues 283-305 form a disordered region; that stretch reads SQKDAARAADRRAQVGSGDRSER.

The protein belongs to the prokaryotic/mitochondrial release factor family. Post-translationally, methylated by PrmC. Methylation increases the termination efficiency of RF1.

It is found in the cytoplasm. Its function is as follows. Peptide chain release factor 1 directs the termination of translation in response to the peptide chain termination codons UAG and UAA. The sequence is that of Peptide chain release factor 1 from Methylobacterium nodulans (strain LMG 21967 / CNCM I-2342 / ORS 2060).